The sequence spans 486 residues: Ribulose bisphosphate carboxylase large chain (486 aa).

2 residues coordinate substrate: asparagine 125 and threonine 175. Lysine 177 functions as the Proton acceptor in the catalytic mechanism. Lysine 179 is a binding site for substrate. Mg(2+) is bound by residues lysine 203, aspartate 205, and glutamate 206. An N6-carboxylysine modification is found at lysine 203. Histidine 295 functions as the Proton acceptor in the catalytic mechanism. Positions 296, 328, and 380 each coordinate substrate.

The protein belongs to the RuBisCO large chain family. Type I subfamily. In terms of assembly, heterohexadecamer of 8 large chains and 8 small chains. Mg(2+) is required as a cofactor.

The catalysed reaction is 2 (2R)-3-phosphoglycerate + 2 H(+) = D-ribulose 1,5-bisphosphate + CO2 + H2O. It carries out the reaction D-ribulose 1,5-bisphosphate + O2 = 2-phosphoglycolate + (2R)-3-phosphoglycerate + 2 H(+). RuBisCO catalyzes two reactions: the carboxylation of D-ribulose 1,5-bisphosphate, the primary event in carbon dioxide fixation, as well as the oxidative fragmentation of the pentose substrate. Both reactions occur simultaneously and in competition at the same active site. The chain is Ribulose bisphosphate carboxylase large chain from Afipia carboxidovorans (strain ATCC 49405 / DSM 1227 / KCTC 32145 / OM5) (Oligotropha carboxidovorans).